A 507-amino-acid chain; its full sequence is MTQSDFFSLDGISKRFGVVQALDNVSIAFRPGEVLALVGENGAGKSTMMRILEGVSGPDTGTVRHGSTPIVFGEPRDSHRAGIRVIHQEPEIVPNLTVAENIFVGELPRLAGVLLDWRKLEEQTDRVLATFGMQQDMRPRQLCGTLGPAQRQMIEIMRAIRAGGRLIAFDEPTSSLTDDEARRLFSVVRRLREKGTSIIYISHRLNEIIDLADRIVVLRDGRLVDDSPAAGASEQTIAKLMVGRNIDDLFTRETWRSGEQLLDVAGLTTDRVNDVSLRVRRGEVLGIAGLMGAGRSELAKAIVGYDRRIAGTIAMNGVPVLPNSPHAAIVAGIGFAPEDRKHEALLLFRSILDNAALCVPDKTSSFGFFNRRKAMEIVSPLAAKMSIKAPNLDEQVSKLSGGNQQKVVLARWLARQPMLLILDEPTRGIDIGAKAEIYRLIDELAASGIGIILISSEMPELIGLADRVLVMAGGRITAELARPDIDEATILKHAMPQSASSPGDYIQ.

2 consecutive ABC transporter domains span residues 7 to 245 (FSLD…VGRN) and 249 to 498 (LFTR…MPQS). 39–46 (GENGAGKS) provides a ligand contact to ATP.

The protein belongs to the ABC transporter superfamily. Ribose importer (TC 3.A.1.2.1) family. The complex is composed of an ATP-binding protein (RbsA), two transmembrane proteins (RbsC) and a solute-binding protein (RbsB).

It localises to the cell inner membrane. The catalysed reaction is D-ribose(out) + ATP + H2O = D-ribose(in) + ADP + phosphate + H(+). Its function is as follows. Part of the ABC transporter complex RbsABC involved in ribose import. Responsible for energy coupling to the transport system. The protein is Ribose import ATP-binding protein RbsA 2 of Mesorhizobium japonicum (strain LMG 29417 / CECT 9101 / MAFF 303099) (Mesorhizobium loti (strain MAFF 303099)).